A 70-amino-acid chain; its full sequence is DNA-directed RNA polymerases I, II, and III subunit rpabc5 (70 aa).

Zn(2+) is bound by residues cysteine 7, cysteine 10, cysteine 44, and cysteine 45.

This sequence belongs to the archaeal Rpo10/eukaryotic RPB10 RNA polymerase subunit family. As to quaternary structure, component of the RNA polymerase I (Pol I), RNA polymerase II (Pol II) and RNA polymerase III (Pol III) complexes.

It localises to the nucleus. Its function is as follows. DNA-dependent RNA polymerase catalyzes the transcription of DNA into RNA using the four ribonucleoside triphosphates as substrates. Common component of RNA polymerases I, II and III which synthesize ribosomal RNA precursors, mRNA precursors and many functional non-coding RNAs, and a small RNAs, such as 5S rRNA and tRNAs, respectively. Pol II is the central component of the basal RNA polymerase II transcription machinery. Pols are composed of mobile elements that move relative to each other. In Pol II, RBP10 is part of the core element with the central large cleft. The sequence is that of DNA-directed RNA polymerases I, II, and III subunit rpabc5 (polr2l) from Dictyostelium discoideum (Social amoeba).